The chain runs to 227 residues: 2,3-bisphosphoglycerate-dependent phosphoglycerate mutase (227 aa).

Residues 7 to 14 (RHGQSEWN), 20 to 21 (TG), Arg59, 86 to 89 (ERHY), Lys97, 113 to 114 (RR), and 182 to 183 (GN) each bind substrate. The Tele-phosphohistidine intermediate role is filled by His8. Glu86 (proton donor/acceptor) is an active-site residue.

It belongs to the phosphoglycerate mutase family. BPG-dependent PGAM subfamily. Homodimer.

The enzyme catalyses (2R)-2-phosphoglycerate = (2R)-3-phosphoglycerate. It participates in carbohydrate degradation; glycolysis; pyruvate from D-glyceraldehyde 3-phosphate: step 3/5. Its function is as follows. Catalyzes the interconversion of 2-phosphoglycerate and 3-phosphoglycerate. This Neisseria meningitidis serogroup C (strain 053442) protein is 2,3-bisphosphoglycerate-dependent phosphoglycerate mutase.